The chain runs to 287 residues: MEGCVAQSKWLAYCRLMRIDKPIGSLLLLWPTYWALWLAGGTAPGGKLLLVFTCGVFFMRAAGCVINDFADRHFDGHVKRTCQRPLPCGALSEREAKALFVLLVGLSFALVLTLNAMTIWLSVAALTLAWLYPFIKRFSHLPQVILGMAFGWSIPMAYAAVGESLPLSCWLLFAANICWTVAYDTQYAMVDRDDDLRIGIKSTAILFGRYDRLVIGLLQLATLLLLLWVGDLNQLQGAYYWGVLLAAVLFVYQQQLITRRARTSCFRAFMNNNYVGLILFLGILLAL.

8 consecutive transmembrane segments (helical) span residues 23 to 43, 46 to 66, 99 to 119, 141 to 161, 162 to 182, 213 to 233, 237 to 257, and 266 to 286; these read IGSL…GGTA, GKLL…GCVI, LFVL…AMTI, LPQV…YAAV, GESL…WTVA, LVIG…GDLN, GAYY…QQLI, and FRAF…ILLA.

This sequence belongs to the UbiA prenyltransferase family. It depends on Mg(2+) as a cofactor.

It localises to the cell inner membrane. It catalyses the reaction all-trans-octaprenyl diphosphate + 4-hydroxybenzoate = 4-hydroxy-3-(all-trans-octaprenyl)benzoate + diphosphate. Its pathway is cofactor biosynthesis; ubiquinone biosynthesis. In terms of biological role, catalyzes the prenylation of para-hydroxybenzoate (PHB) with an all-trans polyprenyl group. Mediates the second step in the final reaction sequence of ubiquinone-8 (UQ-8) biosynthesis, which is the condensation of the polyisoprenoid side chain with PHB, generating the first membrane-bound Q intermediate 3-octaprenyl-4-hydroxybenzoate. The sequence is that of 4-hydroxybenzoate octaprenyltransferase from Edwardsiella ictaluri (strain 93-146).